The sequence spans 540 residues: Na(+)/H(+) antiporter NhaS2 (540 aa).

The next 10 membrane-spanning stretches (helical) occupy residues 29-49, 71-91, 117-137, 138-158, 207-227, 256-276, 296-316, 323-343, 358-378, and 389-409; these read ITTL…VALV, GLSV…ILIF, VVIS…LAWV, TAAG…IAAF, IFVA…LCVG, LGVS…NLAL, FGVN…SILL, LIAI…LLYL, VLIA…ALPL, and LVFS…PWVV.

It belongs to the monovalent cation:proton antiporter 1 (CPA1) transporter (TC 2.A.36) family.

It is found in the cell membrane. Required for Na(+) uptake into the cell, especially at low external Na(+) concentrations or low Na(+)/K(+) ratios. May be part of a sodium cycle that permits re-entry of sodium into the cell. The polypeptide is Na(+)/H(+) antiporter NhaS2 (nhaS2) (Synechocystis sp. (strain ATCC 27184 / PCC 6803 / Kazusa)).